We begin with the raw amino-acid sequence, 295 residues long: MEHQLLCCEVETIRRAYPDTNLLNDRVLRAMLKTEETCAPSVSYFKCVQKEIVPSMRKIVATWMLEVCEEQKCEEEVFPLAMNYLDRFLSLEPLKKSRLQLLGATCMFVASKMKETIPLTAEKLCIYTDNSIRPEELLQMELLLVNKLKWNLAAMTPHDFIEHFLSKMPEADENKQTIRKHAQTFVALCATDVKFISNPPSMVAAGSVVAAMQGLNLGSPNNFLSCYRTTHFLSRVIKCDPDCLRACQEQIEALLESSLRQAQQNVDPKATEEEGEVEEEAGLACTPTDVRDVDI.

The region spanning 28–152 is the Cyclin N-terminal domain; that stretch reads LRAMLKTEET…LLVNKLKWNL (125 aa). Residues 262–283 are disordered; that stretch reads AQQNVDPKATEEEGEVEEEAGL. Lysine 269 participates in a covalent cross-link: Glycyl lysine isopeptide (Lys-Gly) (interchain with G-Cter in ubiquitin). Threonine 286 is modified (phosphothreonine).

It belongs to the cyclin family. Cyclin D subfamily. In terms of assembly, interacts with either CDK4 or CDK6 protein kinase to form a serine/threonine kinase holoenzyme complex. The cyclin subunit imparts substrate specificity to the complex. Component of the ternary complex CCND1/CDK4/CDKN1B required for nuclear translocation and modulation of CDK4-mediated kinase activity. Interacts directly with CDKN1B. Can form similar complexes with either CDKN1A or CDKN2A. Interacts with UHRF2; the interaction ubiquitinates CCND1 and appears to occur independently of phosphorylation. Interacts with USP2. Interacts (via cyclin N-terminal domain) with INSM1 (via N-terminal region); the interaction competes with the binding of CCND1 to CDK4 during cell cycle progression and inhibits CDK4 activity. Interacts with CDK4; the interaction is prevented with the binding of CCND1 to INSM1 during cell cycle progression. Phosphorylation at Thr-286 by MAP kinases is required for ubiquitination and degradation by the DCX(AMBRA1) complex. It also plays an essential role for recognition by the FBXO31 component of SCF (SKP1-cullin-F-box) protein ligase complex following DNA damage. In terms of processing, ubiquitinated at Lys-269 by the DCX(AMBRA1) complex during the transition from G1 to S cell phase, leading to its degradation: ubiquitination is dependent on Thr-286 phosphorylation. The DCX(AMBRA1) complex represents the major regulator of CCND1 stability during the G1/S transition. Also ubiquitinated by the SCF(FBXO4) and Cul7-RING(FBXW8) ubiquitin-protein ligase complexes. Following DNA damage it is ubiquitinated by the SCF(FBXO31) protein ligase complex. SCF(FBXO31) ubiquitination is dependent on Thr-286 phosphorylation. Ubiquitinated also by UHRF2 apparently in a phosphorylation-independent manner. Ubiquitination leads to its degradation and G1 arrest. Deubiquitinated by USP2; leading to its stabilization. In terms of tissue distribution, expressed in the intestinal epithelium.

The protein localises to the nucleus. It is found in the cytoplasm. Its subcellular location is the nucleus membrane. In terms of biological role, regulatory component of the cyclin D1-CDK4 (DC) complex that phosphorylates and inhibits members of the retinoblastoma (RB) protein family including RB1 and regulates the cell-cycle during G(1)/S transition. Phosphorylation of RB1 allows dissociation of the transcription factor E2F from the RB/E2F complex and the subsequent transcription of E2F target genes which are responsible for the progression through the G(1) phase. Hypophosphorylates RB1 in early G(1) phase. Cyclin D-CDK4 complexes are major integrators of various mitogenenic and antimitogenic signals. Also a substrate for SMAD3, phosphorylating SMAD3 in a cell-cycle-dependent manner and repressing its transcriptional activity. Component of the ternary complex, cyclin D1/CDK4/CDKN1B, required for nuclear translocation and activity of the cyclin D-CDK4 complex. Exhibits transcriptional corepressor activity with INSM1 on the NEUROD1 and INS promoters in a cell cycle-independent manner. The protein is G1/S-specific cyclin-D1 (Ccnd1) of Mus musculus (Mouse).